A 156-amino-acid polypeptide reads, in one-letter code: RNA polymerase sigma factor SigS (156 aa).

The short motif at 29 to 44 (EYYQLLLIKMWQLSQI) is the Polymerase core binding element. The segment at residues 126 to 145 (QYEIADIMSLSTSTIKLIKA) is a DNA-binding region (H-T-H motif).

The protein belongs to the sigma-70 factor family.

Functionally, sigma factors are initiation factors that promote the attachment of RNA polymerase to specific initiation sites and are then released. Sigma-S contributes to the protection against external stress, thus playing a role in cellular fitness and survival. In Staphylococcus aureus (strain MRSA252), this protein is RNA polymerase sigma factor SigS (sigS).